The primary structure comprises 121 residues: Small ribosomal subunit protein uS13 (121 aa).

Residues 94 to 121 (GLPVRGQNTKNNARTRKGPRRTVANKKK) form a disordered region. Positions 106-121 (ARTRKGPRRTVANKKK) are enriched in basic residues.

This sequence belongs to the universal ribosomal protein uS13 family. In terms of assembly, part of the 30S ribosomal subunit. Forms a loose heterodimer with protein S19. Forms two bridges to the 50S subunit in the 70S ribosome.

In terms of biological role, located at the top of the head of the 30S subunit, it contacts several helices of the 16S rRNA. In the 70S ribosome it contacts the 23S rRNA (bridge B1a) and protein L5 of the 50S subunit (bridge B1b), connecting the 2 subunits; these bridges are implicated in subunit movement. Contacts the tRNAs in the A and P-sites. In Geobacillus sp. (strain WCH70), this protein is Small ribosomal subunit protein uS13.